We begin with the raw amino-acid sequence, 512 residues long: ETS translocation variant 3 (512 aa).

The ETS DNA-binding region spans 35 to 116; the sequence is IQLWHFILEL…KGKRFTYKFN (82 aa). The interval 136–222 is disordered; sequence VPQSAPPVPT…NAIGGGGIGH (87 aa). A phosphoserine mark is found at Ser139, Ser159, and Ser315. Over residues 158-184 the composition is skewed to polar residues; sequence HSPTNDVQPGRFSASSLTASGQESSNG. The disordered stretch occupies residues 336-512; the sequence is PEESTQFSIK…QGLATAAADA (177 aa). The span at 380–406 shows a compositional bias: basic and acidic residues; it reads IKVEPASEKDPESLRQSAREKEEHTQE. A Glycyl lysine isopeptide (Lys-Gly) (interchain with G-Cter in SUMO2) cross-link involves residue Lys381. At Lys388 the chain carries N6-acetyllysine; alternate. Residue Lys388 forms a Glycyl lysine isopeptide (Lys-Gly) (interchain with G-Cter in SUMO2); alternate linkage. Acidic residues predominate over residues 443–452; the sequence is EPLEVTEDIE. Composition is skewed to basic and acidic residues over residues 453–468 and 479–491; these read DRPG…KEDA and RWND…ELSK.

It belongs to the ETS family.

The protein resides in the nucleus. Transcriptional repressor that contribute to growth arrest during terminal macrophage differentiation by repressing target genes involved in Ras-dependent proliferation. Represses MMP1 promoter activity. The sequence is that of ETS translocation variant 3 (ETV3) from Pan paniscus (Pygmy chimpanzee).